The primary structure comprises 147 residues: Large ribosomal subunit protein uL22 (147 aa).

It belongs to the universal ribosomal protein uL22 family. As to quaternary structure, part of the 50S ribosomal subunit.

Functionally, this protein binds specifically to 23S rRNA; its binding is stimulated by other ribosomal proteins, e.g. L4, L17, and L20. It is important during the early stages of 50S assembly. It makes multiple contacts with different domains of the 23S rRNA in the assembled 50S subunit and ribosome. Its function is as follows. The globular domain of the protein is located near the polypeptide exit tunnel on the outside of the subunit, while an extended beta-hairpin is found that lines the wall of the exit tunnel in the center of the 70S ribosome. The protein is Large ribosomal subunit protein uL22 of Fervidobacterium nodosum (strain ATCC 35602 / DSM 5306 / Rt17-B1).